Consider the following 268-residue polypeptide: Tetratricopeptide repeat protein 33 (268 aa).

Residues 14 to 34 are disordered; the sequence is VSKQTVQQFEQDSEQADEDEV. Positions 24–34 are enriched in acidic residues; the sequence is QDSEQADEDEV. TPR repeat units lie at residues 60 to 93, 94 to 127, and 128 to 161; these read SKRL…TPED, AVLY…RPIW, and WEAW…HPSE. A disordered region spans residues 249–268; that stretch reads EGDDNPTSSSQSVLIKARGL.

The polypeptide is Tetratricopeptide repeat protein 33 (ttc33) (Danio rerio (Zebrafish)).